The sequence spans 204 residues: Leucyl/phenylalanyl-tRNA--protein transferase (204 aa).

The protein belongs to the L/F-transferase family.

It is found in the cytoplasm. It catalyses the reaction N-terminal L-lysyl-[protein] + L-leucyl-tRNA(Leu) = N-terminal L-leucyl-L-lysyl-[protein] + tRNA(Leu) + H(+). The catalysed reaction is N-terminal L-arginyl-[protein] + L-leucyl-tRNA(Leu) = N-terminal L-leucyl-L-arginyl-[protein] + tRNA(Leu) + H(+). The enzyme catalyses L-phenylalanyl-tRNA(Phe) + an N-terminal L-alpha-aminoacyl-[protein] = an N-terminal L-phenylalanyl-L-alpha-aminoacyl-[protein] + tRNA(Phe). Functions in the N-end rule pathway of protein degradation where it conjugates Leu, Phe and, less efficiently, Met from aminoacyl-tRNAs to the N-termini of proteins containing an N-terminal arginine or lysine. In Rhizobium meliloti (strain 1021) (Ensifer meliloti), this protein is Leucyl/phenylalanyl-tRNA--protein transferase.